Reading from the N-terminus, the 195-residue chain is CASP-like protein 1B2 (195 aa).

At 1–25 (MDLEKGKKPSEQAAACRIMQVKDKL) the chain is on the cytoplasmic side. A helical transmembrane segment spans residues 26–46 (ITLQPVVRACVFLATAVAAVI). Residues 47–78 (MGLNKQSYTTVVAIVGTRPVTQTFTAKFKDTP) lie on the Extracellular side of the membrane. The chain crosses the membrane as a helical span at residues 79 to 99 (AFVFFVIANAIASGYNLMVLV). Over 100-114 (TRRILQRRAQSLSVH) the chain is Cytoplasmic. Residues 115 to 135 (LLDMVILTLLATGSATAASMA) form a helical membrane-spanning segment. At 136 to 160 (QLGKNGNLHARWNPICDKFGSFCNH) the chain is on the extracellular side. A helical membrane pass occupies residues 161 to 181 (GGIALVSSFIGVALMLALNLL). Residues 182-195 (SAAANSPRSNVTGQ) are Cytoplasmic-facing.

It belongs to the Casparian strip membrane proteins (CASP) family. As to quaternary structure, homodimer and heterodimers.

The protein localises to the cell membrane. This chain is CASP-like protein 1B2, found in Oryza sativa subsp. indica (Rice).